The following is a 335-amino-acid chain: Biotin synthase (335 aa).

The Radical SAM core domain occupies 51–281 (YRVQLASLLS…RSRVRLSAGR (231 aa)). [4Fe-4S] cluster is bound by residues Cys-66, Cys-70, and Cys-73. The [2Fe-2S] cluster site is built by Cys-112, Cys-144, Cys-204, and Arg-276.

This sequence belongs to the radical SAM superfamily. Biotin synthase family. In terms of assembly, homodimer. The cofactor is [4Fe-4S] cluster. [2Fe-2S] cluster serves as cofactor.

It catalyses the reaction (4R,5S)-dethiobiotin + (sulfur carrier)-SH + 2 reduced [2Fe-2S]-[ferredoxin] + 2 S-adenosyl-L-methionine = (sulfur carrier)-H + biotin + 2 5'-deoxyadenosine + 2 L-methionine + 2 oxidized [2Fe-2S]-[ferredoxin]. The protein operates within cofactor biosynthesis; biotin biosynthesis; biotin from 7,8-diaminononanoate: step 2/2. In terms of biological role, catalyzes the conversion of dethiobiotin (DTB) to biotin by the insertion of a sulfur atom into dethiobiotin via a radical-based mechanism. This chain is Biotin synthase, found in Prochlorococcus marinus (strain MIT 9303).